The primary structure comprises 398 residues: Serpin-Z1C (398 aa).

Residues 343–367 (GTEAAASTAIKMALLQARPPSVMDF) form an RCL region.

Belongs to the serpin family.

Functionally, inhibits chymotrypsin and cathepsin G in vitro. The chain is Serpin-Z1C from Triticum aestivum (Wheat).